The chain runs to 161 residues: UPF0178 protein PXO_00400 (161 aa).

Belongs to the UPF0178 family.

The sequence is that of UPF0178 protein PXO_00400 from Xanthomonas oryzae pv. oryzae (strain PXO99A).